The primary structure comprises 148 residues: Arginine repressor (148 aa).

This sequence belongs to the ArgR family.

It is found in the cytoplasm. It functions in the pathway amino-acid biosynthesis; L-arginine biosynthesis [regulation]. Regulates arginine biosynthesis genes. This is Arginine repressor from Pelodictyon phaeoclathratiforme (strain DSM 5477 / BU-1).